We begin with the raw amino-acid sequence, 236 residues long: SERTA domain-containing protein 1 (236 aa).

The disordered stretch occupies residues 1 to 20; the sequence is MLSKGLKRKREEEEEKEPLA. The 48-residue stretch at 38–85 folds into the SERTA domain; that stretch reads PAVASSSLFDLSVLKLHHSLQQSEPDLRHLVLVVNTLRRIQASMAPAA. A disordered region spans residues 189-211; that stretch reads PASEGLKPGPEDGPGKEEAPELD. Residues 197 to 207 show a composition bias toward basic and acidic residues; the sequence is GPEDGPGKEEA.

In terms of assembly, interacts with the PHD-bromodomain of TIF1, TRIM28/TIF1B and p300/CBP. Interacts with E2F1 and TFDP1; modulates transactivation activity of TFDP1/E2F complexes. Also interacts with CDK4. Polyubiquitinated, which promotes proteasomal degradation.

Its function is as follows. Acts at E2F-responsive promoters as coregulator to integrate signals provided by PHD- and/or bromodomain-containing transcription factors. Stimulates E2F1/TFDP1 transcriptional activity. Renders the activity of cyclin D1/CDK4 resistant to the inhibitory effects of CDKN2A/p16INK4A. The protein is SERTA domain-containing protein 1 (SERTAD1) of Homo sapiens (Human).